Reading from the N-terminus, the 338-residue chain is 5-dehydro-2-deoxygluconokinase (338 aa).

This sequence belongs to the carbohydrate kinase PfkB family.

It catalyses the reaction 5-dehydro-2-deoxy-D-gluconate + ATP = 6-phospho-5-dehydro-2-deoxy-D-gluconate + ADP + H(+). Its pathway is polyol metabolism; myo-inositol degradation into acetyl-CoA; acetyl-CoA from myo-inositol: step 5/7. Its function is as follows. Catalyzes the phosphorylation of 5-dehydro-2-deoxy-D-gluconate (2-deoxy-5-keto-D-gluconate or DKG) to 6-phospho-5-dehydro-2-deoxy-D-gluconate (DKGP). This chain is 5-dehydro-2-deoxygluconokinase, found in Clostridium perfringens (strain ATCC 13124 / DSM 756 / JCM 1290 / NCIMB 6125 / NCTC 8237 / Type A).